The following is a 422-amino-acid chain: Monoacylglycerol lipase ABHD2 (422 aa).

Residues 1 to 15 (MSAQLEADVRTMSPE) are Cytoplasmic-facing. Residues 16-36 (MPAMFDGMKLAAVAAVLYVIV) form a helical; Signal-anchor for type II membrane protein membrane-spanning segment. The Extracellular segment spans residues 37–422 (RSLNLKCPTA…HKPQCHQQKE (386 aa)). An AB hydrolase-1 domain is found at 134–385 (MVICPGIGNH…HGGHLGFFEG (252 aa)). The N-linked (GlcNAc...) asparagine glycan is linked to Asn-142. The Nucleophile role is filled by Ser-213. N-linked (GlcNAc...) asparagine glycosylation is found at Asn-285, Asn-335, and Asn-344. Residues Asp-348 and His-379 each act as charge relay system in the active site.

The protein belongs to the AB hydrolase superfamily. AB hydrolase 4 family.

It localises to the cell membrane. It carries out the reaction Hydrolyzes glycerol monoesters of long-chain fatty acids.. The enzyme catalyses an acetyl ester + H2O = an aliphatic alcohol + acetate + H(+). The catalysed reaction is a triacylglycerol + H2O = a diacylglycerol + a fatty acid + H(+). It catalyses the reaction 2-(5Z,8Z,11Z,14Z-eicosatetraenoyl)-glycerol + H2O = glycerol + (5Z,8Z,11Z,14Z)-eicosatetraenoate + H(+). It carries out the reaction a butanoate ester + H2O = an aliphatic alcohol + butanoate + H(+). The enzyme catalyses hexadecanoate ester + H2O = an aliphatic alcohol + hexadecanoate + H(+). Its activity is regulated as follows. Acylglycerol lipase activity is activated upon binding to progesterone. In terms of biological role, progesterone-dependent acylglycerol lipase that catalyzes hydrolysis of endocannabinoid arachidonoylglycerol (AG) from cell membrane. Acts as a progesterone receptor: progesterone-binding activates the acylglycerol lipase activity, mediating degradation of 1-arachidonoylglycerol (1AG) and 2-arachidonoylglycerol (2AG) to glycerol and arachidonic acid (AA). Also displays an ester hydrolase activity against acetyl ester, butanoate ester and hexadecanoate ester. Plays a key role in sperm capacitation in response to progesterone by mediating degradation of 2AG, an inhibitor of the sperm calcium channel CatSper, leading to calcium influx via CatSper and sperm activation. May also play a role in smooth muscle cells migration. In Danio rerio (Zebrafish), this protein is Monoacylglycerol lipase ABHD2 (abhd2b).